Consider the following 176-residue polypeptide: Ribosome maturation factor RimM (176 aa).

One can recognise a PRC barrel domain in the interval 93–170 (DGEYYHADLI…ELPTEIEGDT (78 aa)).

Belongs to the RimM family. Binds ribosomal protein uS19.

The protein resides in the cytoplasm. Functionally, an accessory protein needed during the final step in the assembly of 30S ribosomal subunit, possibly for assembly of the head region. Essential for efficient processing of 16S rRNA. May be needed both before and after RbfA during the maturation of 16S rRNA. It has affinity for free ribosomal 30S subunits but not for 70S ribosomes. This Rhodopseudomonas palustris (strain BisB5) protein is Ribosome maturation factor RimM.